We begin with the raw amino-acid sequence, 255 residues long: Hemin import ATP-binding protein HmuV (255 aa).

An ABC transporter domain is found at 2–238 (LRVENLHVRR…EPLKAVFGLE (237 aa)). 34-41 (GPNGAGKS) lines the ATP pocket.

It belongs to the ABC transporter superfamily. Heme (hemin) importer (TC 3.A.1.14.5) family. The complex is composed of two ATP-binding proteins (HmuV), two transmembrane proteins (HmuU) and a solute-binding protein (HmuT).

The protein resides in the cell inner membrane. Part of the ABC transporter complex HmuTUV involved in hemin import. Responsible for energy coupling to the transport system. This chain is Hemin import ATP-binding protein HmuV, found in Pseudomonas fluorescens (strain ATCC BAA-477 / NRRL B-23932 / Pf-5).